The primary structure comprises 129 residues: Lysozyme C (129 aa).

Residues 1-129 enclose the C-type lysozyme domain; sequence KVYGRCELAA…VNAWTRGCRL (129 aa). Cystine bridges form between Cys6–Cys127, Cys30–Cys115, Cys64–Cys80, and Cys76–Cys94. Residues Glu35 and Asp52 contribute to the active site.

It belongs to the glycosyl hydrolase 22 family. Monomer.

The protein resides in the secreted. It carries out the reaction Hydrolysis of (1-&gt;4)-beta-linkages between N-acetylmuramic acid and N-acetyl-D-glucosamine residues in a peptidoglycan and between N-acetyl-D-glucosamine residues in chitodextrins.. In terms of biological role, lysozymes have primarily a bacteriolytic function; those in tissues and body fluids are associated with the monocyte-macrophage system and enhance the activity of immunoagents. In Syrmaticus soemmerringii (Copper pheasant), this protein is Lysozyme C (LYZ).